We begin with the raw amino-acid sequence, 323 residues long: Acetyl-coenzyme A carboxylase carboxyl transferase subunit alpha (323 aa).

Residues 39–293 (RLSKKSQQLT…RRALGDSLRQ (255 aa)) form the CoA carboxyltransferase C-terminal domain.

Belongs to the AccA family. As to quaternary structure, acetyl-CoA carboxylase is a heterohexamer composed of biotin carboxyl carrier protein (AccB), biotin carboxylase (AccC) and two subunits each of ACCase subunit alpha (AccA) and ACCase subunit beta (AccD).

It localises to the cytoplasm. It catalyses the reaction N(6)-carboxybiotinyl-L-lysyl-[protein] + acetyl-CoA = N(6)-biotinyl-L-lysyl-[protein] + malonyl-CoA. The protein operates within lipid metabolism; malonyl-CoA biosynthesis; malonyl-CoA from acetyl-CoA: step 1/1. Its function is as follows. Component of the acetyl coenzyme A carboxylase (ACC) complex. First, biotin carboxylase catalyzes the carboxylation of biotin on its carrier protein (BCCP) and then the CO(2) group is transferred by the carboxyltransferase to acetyl-CoA to form malonyl-CoA. The polypeptide is Acetyl-coenzyme A carboxylase carboxyl transferase subunit alpha (Burkholderia pseudomallei (strain 1106a)).